The sequence spans 56 residues: UPF0291 protein Clos_1191 (56 aa).

It belongs to the UPF0291 family.

Its subcellular location is the cytoplasm. This is UPF0291 protein Clos_1191 from Alkaliphilus oremlandii (strain OhILAs) (Clostridium oremlandii (strain OhILAs)).